The primary structure comprises 367 residues: B2 bradykinin receptor (367 aa).

Over 1–36 (MLNITSQVLAPALNGSVSQSSGCPNTEWSGWLNVIQ) the chain is Extracellular. Asn-3 and Asn-14 each carry an N-linked (GlcNAc...) asparagine glycan. A helical membrane pass occupies residues 37–60 (APFLWVLFVLATLENLFVLSVFCL). Residues 61-69 (HKSSCTVAE) lie on the Cytoplasmic side of the membrane. Residues 70 to 94 (VYLGNLAAADLILACGLPFWAVTIA) form a helical membrane-spanning segment. Topologically, residues 95-107 (NHFDWLFGEALCR) are extracellular. Cys-106 and Cys-187 form a disulfide bridge. A helical membrane pass occupies residues 108-129 (VVNTMIYMNLYSSICFLMLVSI). The Cytoplasmic segment spans residues 130–151 (DRYLALVKTMSIGRMRRVRWAK). Tyr-132 carries the post-translational modification Phosphotyrosine. A helical membrane pass occupies residues 152–174 (LYSLVIWGCTLLLSSPMLVFRTM). The Extracellular segment spans residues 175-197 (KDYRDEGYNVTACIIDYPSRSWE). The N-linked (GlcNAc...) asparagine glycan is linked to Asn-183. Residues 198–224 (VFTNVLLNLVGFLLPLSVITFCTVQIL) traverse the membrane as a helical segment. Topologically, residues 225-243 (QVLRNNEMQKFKEIQTERR) are cytoplasmic. A helical transmembrane segment spans residues 244-268 (ATVLVLAVLLLFVVCWLPFQVSTFL). Residues 269–287 (DTLLKLGVLSSCWDEHVID) are Extracellular-facing. The helical transmembrane segment at 288–311 (VITQVGSFMGYSNSCLNPLVYVIV) threads the bilayer. The Cytoplasmic segment spans residues 312 to 367 (GKRFRKKSREVYRAACPKAGCVLEPVQAESSMGTLRTSISVERQIHKLPEWTRSSQ). Tyr-323 carries the phosphotyrosine modification. Cys-327 carries S-palmitoyl cysteine lipidation. Ser-342 bears the Phosphoserine mark. Thr-345 is subject to Phosphothreonine. Phosphoserine; by GRK6 occurs at positions 349 and 351.

It belongs to the G-protein coupled receptor 1 family. Bradykinin receptor subfamily. BDKRB2 sub-subfamily. Forms a complex with PECAM1 and GNAQ. Interacts with PECAM1.

It is found in the cell membrane. Its function is as follows. Receptor for bradykinin. It is associated with G proteins that activate a phosphatidylinositol-calcium second messenger system. This is B2 bradykinin receptor (BDKRB2) from Oryctolagus cuniculus (Rabbit).